Here is a 717-residue protein sequence, read N- to C-terminus: Fatty acid oxidation complex subunit alpha (717 aa).

Positions 1–190 (MIHAGNAITV…KDGAVDAVVA (190 aa)) are enoyl-CoA hydratase/isomerase. Asp298 is a binding site for substrate. A 3-hydroxyacyl-CoA dehydrogenase region spans residues 313-717 (HPVNQAAVLG…MAANNKKFYG (405 aa)). NAD(+) is bound by residues Met326, Asp345, 402–404 (VTE), Lys409, and Ser431. The For 3-hydroxyacyl-CoA dehydrogenase activity role is filled by His452. Asn455 lines the NAD(+) pocket. Asn502 provides a ligand contact to substrate.

In the N-terminal section; belongs to the enoyl-CoA hydratase/isomerase family. It in the C-terminal section; belongs to the 3-hydroxyacyl-CoA dehydrogenase family. As to quaternary structure, heterotetramer of two alpha chains (FadB) and two beta chains (FadA).

The enzyme catalyses a (3S)-3-hydroxyacyl-CoA + NAD(+) = a 3-oxoacyl-CoA + NADH + H(+). It carries out the reaction a (3S)-3-hydroxyacyl-CoA = a (2E)-enoyl-CoA + H2O. The catalysed reaction is a 4-saturated-(3S)-3-hydroxyacyl-CoA = a (3E)-enoyl-CoA + H2O. It catalyses the reaction (3S)-3-hydroxybutanoyl-CoA = (3R)-3-hydroxybutanoyl-CoA. The enzyme catalyses a (3Z)-enoyl-CoA = a 4-saturated (2E)-enoyl-CoA. It carries out the reaction a (3E)-enoyl-CoA = a 4-saturated (2E)-enoyl-CoA. It functions in the pathway lipid metabolism; fatty acid beta-oxidation. Its function is as follows. Involved in the aerobic and anaerobic degradation of long-chain fatty acids via beta-oxidation cycle. Catalyzes the formation of 3-oxoacyl-CoA from enoyl-CoA via L-3-hydroxyacyl-CoA. It can also use D-3-hydroxyacyl-CoA and cis-3-enoyl-CoA as substrate. The sequence is that of Fatty acid oxidation complex subunit alpha from Acinetobacter baumannii (strain SDF).